The following is a 407-amino-acid chain: Peptidase T (407 aa).

Residue His-82 participates in Zn(2+) binding. Asp-84 is an active-site residue. Residue Asp-143 participates in Zn(2+) binding. Catalysis depends on Glu-177, which acts as the Proton acceptor. Residues Glu-178, Asp-200, and His-382 each coordinate Zn(2+).

This sequence belongs to the peptidase M20B family. Zn(2+) serves as cofactor.

It localises to the cytoplasm. The enzyme catalyses Release of the N-terminal residue from a tripeptide.. Functionally, cleaves the N-terminal amino acid of tripeptides. The sequence is that of Peptidase T from Streptococcus pyogenes serotype M4 (strain MGAS10750).